The chain runs to 176 residues: NAD(P)H-quinone oxidoreductase subunit 6, chloroplastic (176 aa).

Helical transmembrane passes span 10–30 (FLLVFLGSGLILGSLGVVLLT), 32–52 (PIFSAFSLGLTLVCISLLYIL), 63–83 (LLIYVGAINVLIIFGVMFMNG), 92–112 (LWTVGDGMTLMVCTSIFISLI), and 152–172 (FFLPFELISIILLAALIGAIV).

It belongs to the complex I subunit 6 family. As to quaternary structure, NDH is composed of at least 16 different subunits, 5 of which are encoded in the nucleus.

It is found in the plastid. The protein localises to the chloroplast thylakoid membrane. It carries out the reaction a plastoquinone + NADH + (n+1) H(+)(in) = a plastoquinol + NAD(+) + n H(+)(out). The enzyme catalyses a plastoquinone + NADPH + (n+1) H(+)(in) = a plastoquinol + NADP(+) + n H(+)(out). In terms of biological role, NDH shuttles electrons from NAD(P)H:plastoquinone, via FMN and iron-sulfur (Fe-S) centers, to quinones in the photosynthetic chain and possibly in a chloroplast respiratory chain. The immediate electron acceptor for the enzyme in this species is believed to be plastoquinone. Couples the redox reaction to proton translocation, and thus conserves the redox energy in a proton gradient. The polypeptide is NAD(P)H-quinone oxidoreductase subunit 6, chloroplastic (ndhG) (Lotus japonicus (Lotus corniculatus var. japonicus)).